The chain runs to 76 residues: DNA-directed RNA polymerase subunit epsilon (76 aa).

It belongs to the RNA polymerase subunit epsilon family. In terms of assembly, RNAP is composed of a core of 2 alpha, a beta and a beta' subunit. The core is associated with a delta subunit, and at least one of epsilon or omega. When a sigma factor is associated with the core the holoenzyme is formed, which can initiate transcription.

It catalyses the reaction RNA(n) + a ribonucleoside 5'-triphosphate = RNA(n+1) + diphosphate. Its function is as follows. A non-essential component of RNA polymerase (RNAP). This is DNA-directed RNA polymerase subunit epsilon from Streptococcus agalactiae serotype Ia (strain ATCC 27591 / A909 / CDC SS700).